We begin with the raw amino-acid sequence, 718 residues long: MLKCAWQNGPRQSNRWLWQLSNQIWKRSYSSKIRNIGILAHIDAGKTTTTERMLFYAGKTRALGEVHRGNTVTDYLTQERERGITICSSAVTFPWNDHRINLLDTPGHIDFTMEVEQSLYAVDGVVVVLDGTAGVEAQTVTVWSQADKHKLPRLIFVNKMDRPDADFVKCVSDLKDKLETQPVCLQYPVKNEDGQLAINDVIHLERLSWQQKDLGRSYKNVKLEPSDDLRQLQEKRNELIDQLSGLDDELADVVISTESFDKVDNALIERALRRATTQQKVVPVLLGSAYKNVGIQRLMDAVNSYLPAPEERNQIYDCFGTEVAGKVFKIVHDKQRGPLTLVRILRGEIKRGMRLISARGQAEVVSKLYEPLADEYREVSAVQSGDVVICAGLKSTVTGDLLTSSEEDDEFDESHELFAIDPQIPDAVYFCSIEPPSVSSQTAMEQALKQLQREDPSLRVSYDSVTGQTVLGGMGELHMDIIKSRILSEYKIDVDLGPLQIAYKEAIESPALTTLSVEKEIAGSKQSVSITLEVVKNQAELFSLDKSPENLPNLNTLRPRILQVLRKGSISALERGPRVGGQVVETQIRLHNATIGRGTADSFVMATASQCVQKLLSTSGTRLLEPIMALQIVAPSERISGIMADLSRRRALINDVLPKGERNKMILVNAPLAELSGYSSALRTISSGTASMTMQPCGFSSMNSVDESLAERRAQGLE.

A mitochondrion-targeting transit peptide spans 1–29 (MLKCAWQNGPRQSNRWLWQLSNQIWKRSY). Residues 31 to 310 (SKIRNIGILA…AVNSYLPAPE (280 aa)) form the tr-type G domain. GTP contacts are provided by residues 40-47 (AHIDAGKT), 104-108 (DTPGH), and 158-161 (NKMD).

It belongs to the TRAFAC class translation factor GTPase superfamily. Classic translation factor GTPase family. EF-G/EF-2 subfamily.

It is found in the mitochondrion. In terms of biological role, mitochondrial GTPase that mediates the disassembly of ribosomes from messenger RNA at the termination of mitochondrial protein biosynthesis. Not involved in the GTP-dependent ribosomal translocation step during translation elongation. This is Ribosome-releasing factor 2, mitochondrial from Drosophila erecta (Fruit fly).